A 340-amino-acid polypeptide reads, in one-letter code: MSQTKPVYASFRSIGAYVPSKILSNADLEKMVDTTDEWIVKRTGIKERHIAADDEYTSDMGAKAAKLAIERAGIEKEDIDLVLCATVTPDYFNMPSTACIISDKLGIRNVQAFDISAACSGFVYLLTVAKAFIESGMKKNVLIIGAEKFSSVVDYTDRSTCILFGDGAGAAIISATDKKEEGFIDVHASADGSYADFLVTPAPGAINPASQKVIDEGLNFVQMKGNETFKLAVKTLTKDVKEILAKNKIDSGDIPHFIPHQANYRIIKAVGDALKMREDQVVLTVGKYGNTSAASIPMAINEIWESGRLKTGDLMLLDTFGGGLTWASALLPFAGESVQR.

Catalysis depends on residues cysteine 119 and histidine 260. The segment at glutamine 261–arginine 265 is ACP-binding. Residue asparagine 290 is part of the active site.

It belongs to the thiolase-like superfamily. FabH family. Homodimer.

The protein localises to the cytoplasm. The catalysed reaction is malonyl-[ACP] + acetyl-CoA + H(+) = 3-oxobutanoyl-[ACP] + CO2 + CoA. It functions in the pathway lipid metabolism; fatty acid biosynthesis. Catalyzes the condensation reaction of fatty acid synthesis by the addition to an acyl acceptor of two carbons from malonyl-ACP. Catalyzes the first condensation reaction which initiates fatty acid synthesis and may therefore play a role in governing the total rate of fatty acid production. Possesses both acetoacetyl-ACP synthase and acetyl transacylase activities. Its substrate specificity determines the biosynthesis of branched-chain and/or straight-chain of fatty acids. This chain is Beta-ketoacyl-[acyl-carrier-protein] synthase III, found in Sulfurovum sp. (strain NBC37-1).